Consider the following 335-residue polypeptide: MPIRHCIVHLIDKKPDGSPAVLHARDSELAASDAIENLLADLNDSYNAKQGKAWGFFHGESGAYPLSGWLKQYLDEEKDFTAFSRVAVEHLQKLMEESNLSTGGHILFAHYQQGMTEYLAIALLHHSEGVAVNAELDVTPSRHLDLGQLHLAARINLSEWKNNQNSKQYISFIKGKNGKKVSDYFRDFIGCQEGVDGPGETRTLLKAFSDFVESEDLPEESAREKTQTLVEYATTQTKLGEPVTLEELSSLIDEDRPKAFYDHIRNKDYGLSPEIPADKRTLNQFRRFTGRAEGLSISFEAHLLGDKVEYDEAAGTLIIKGLPTTLVDQLKRRKD.

This sequence belongs to the YejK family.

Its subcellular location is the cytoplasm. The protein resides in the nucleoid. This Pseudomonas putida (strain GB-1) protein is Nucleoid-associated protein PputGB1_0980.